Consider the following 286-residue polypeptide: ATP synthase gamma chain (286 aa).

The protein belongs to the ATPase gamma chain family. In terms of assembly, F-type ATPases have 2 components, CF(1) - the catalytic core - and CF(0) - the membrane proton channel. CF(1) has five subunits: alpha(3), beta(3), gamma(1), delta(1), epsilon(1). CF(0) has three main subunits: a, b and c.

The protein localises to the cell inner membrane. In terms of biological role, produces ATP from ADP in the presence of a proton gradient across the membrane. The gamma chain is believed to be important in regulating ATPase activity and the flow of protons through the CF(0) complex. This Shewanella oneidensis (strain ATCC 700550 / JCM 31522 / CIP 106686 / LMG 19005 / NCIMB 14063 / MR-1) protein is ATP synthase gamma chain.